Here is a 95-residue protein sequence, read N- to C-terminus: Phosphoribosyl-ATP pyrophosphatase (95 aa).

This sequence belongs to the PRA-PH family.

The protein resides in the cytoplasm. It carries out the reaction 1-(5-phospho-beta-D-ribosyl)-ATP + H2O = 1-(5-phospho-beta-D-ribosyl)-5'-AMP + diphosphate + H(+). It functions in the pathway amino-acid biosynthesis; L-histidine biosynthesis; L-histidine from 5-phospho-alpha-D-ribose 1-diphosphate: step 2/9. The chain is Phosphoribosyl-ATP pyrophosphatase from Halobacterium salinarum (strain ATCC 29341 / DSM 671 / R1).